The following is a 214-amino-acid chain: Orotate phosphoribosyltransferase (214 aa).

Residues Arg125, Lys126, Lys129, His131, and 151–159 contribute to the 5-phospho-alpha-D-ribose 1-diphosphate site; that span reads EDTSTTGNS. Orotate contacts are provided by Thr155 and Arg183.

It belongs to the purine/pyrimidine phosphoribosyltransferase family. PyrE subfamily. In terms of assembly, homodimer. Requires Mg(2+) as cofactor.

It carries out the reaction orotidine 5'-phosphate + diphosphate = orotate + 5-phospho-alpha-D-ribose 1-diphosphate. It functions in the pathway pyrimidine metabolism; UMP biosynthesis via de novo pathway; UMP from orotate: step 1/2. Functionally, catalyzes the transfer of a ribosyl phosphate group from 5-phosphoribose 1-diphosphate to orotate, leading to the formation of orotidine monophosphate (OMP). The polypeptide is Orotate phosphoribosyltransferase (Tropheryma whipplei (strain Twist) (Whipple's bacillus)).